A 753-amino-acid chain; its full sequence is MGRLQLVVLGLTCCWAVASAAKLGAVYTEGGFVEGVNKKLGLLGDSVDIFKGIPFAAPTKALENPQPHPGWQGTLKAKNFKKRCLQATITQDSTYGDEDCLYLNIWVPQGRKQVSRDLPVMIWIYGGAFLMGSGHGANFLNNYLYDGEEIATRGNVIVVTFNYRVGPLGFLSTGDANLPGNYGLRDQHMAIAWVKRNIAAFGGDPNNITLFGESAGGASVSLQTLSPYNKGLIRRAISQSGVALSPWVIQKNPLFWAKKVAEKVGCPVGDAARMAQCLKVTDPRALTLAYKVPLAGLEYPMLHYVGFVPVIDGDFIPADPINLYANAADIDYIAGTNNMDGHIFASIDMPAINKGNKKVTEEDFYKLVSEFTITKGLRGAKTTFDVYTESWAQDPSQENKKKTVVDFETDVLFLVPTEIALAQHRANAKSAKTYAYLFSHPSRMPVYPKWVGADHADDIQYVFGKPFATPTGYRPQDRTVSKAMIAYWTNFAKTGDPNMGDSAVPTHWEPYTTENSGYLEITKKMGSSSMKRSLRTNFLRYWTLTYLALPTVTDQEATPVPPTGDSEATPVPPTGDSETAPVPPTGDSGAPPVPPTGDSGAPPVPPTGDSGAPPVPPTGDSGAPPVPPTGDSGAPPVPPTGDSGAPPVPPTGDSGAPPVPPTGDSGAPPVPPTGDAGPPPVPPTGDSGAPPVPPTGDSGAPPVTPTGDSETAPVPPTGDSGAPPVPPTGDSEAAPVPPTDDSKEAQMPAVIRF.

Residues Met1–Ala20 form the signal peptide. The tract at residues Ala21–Met121 is heparin-binding. A disulfide bridge links Cys84 with Cys100. Asn207 carries N-linked (GlcNAc...) (complex) asparagine glycosylation. Ser214 (acyl-ester intermediate) is an active-site residue. Cysteines 266 and 277 form a disulfide. Residues Asp340 and His455 each act as charge relay system in the active site. The tract at residues Gln555 to Phe753 is disordered. Residues Thr558, Thr569, and Thr579 are each glycosylated (O-linked (GalNAc...) threonine). 17 repeat units span residues Pro559 to Thr569, Pro570 to Ala580, Pro581 to Pro591, Pro592 to Pro602, Pro603 to Pro613, Pro614 to Pro624, Pro625 to Pro635, Pro636 to Pro646, Pro647 to Pro657, Pro658 to Pro668, Pro669 to Pro679, Pro680 to Pro690, Pro691 to Pro701, Pro702 to Ala712, Pro713 to Pro723, Pro724 to Ala734, and Pro735 to Ala745. Positions Pro559–Ala745 are 17 X 11 AA tandem repeats, glycodomain, O-linked (mucin type). O-linked (GalNAc...) threonine glycosylation is found at Thr607, Thr618, Thr629, Thr640, Thr651, Thr662, and Thr673. A compositionally biased stretch (pro residues) spans Pro668–Pro683.

The protein belongs to the type-B carboxylesterase/lipase family. In terms of assembly, interacts with CLC. N- and O-glycosylated. As to expression, mammary gland and pancreas. Detected in pancreatic and duodenal juice (at protein level). Expressed by eosinophils.

It is found in the secreted. It catalyses the reaction a triacylglycerol + H2O = a diacylglycerol + a fatty acid + H(+). The enzyme catalyses 1,2,3-tri-(9Z-octadecenoyl)-glycerol + H2O = di-(9Z)-octadecenoylglycerol + (9Z)-octadecenoate + H(+). It carries out the reaction 1,2,3-trioctanoylglycerol + H2O = dioctanoylglycerol + octanoate + H(+). The catalysed reaction is a sterol ester + H2O = a sterol + a fatty acid + H(+). It catalyses the reaction cholesteryl (9Z-octadecenoate) + H2O = cholesterol + (9Z)-octadecenoate + H(+). The enzyme catalyses an acetyl ester + H2O = an aliphatic alcohol + acetate + H(+). It carries out the reaction a butanoate ester + H2O = an aliphatic alcohol + butanoate + H(+). The catalysed reaction is 9-hexadecanoyloxy-octadecanoate + H2O = 9-hydroxy-octadecanoate + hexadecanoate + H(+). It catalyses the reaction 9-(9Z-octadecenoyloxy)-octadecanoate + H2O = 9-hydroxy-octadecanoate + (9Z)-octadecenoate + H(+). The enzyme catalyses 1-hexadecanoyl-sn-glycero-3-phosphocholine + H2O = sn-glycerol 3-phosphocholine + hexadecanoate + H(+). It carries out the reaction 12-hexadecanoyloxy-octadecanoate + H2O = 12-hydroxyoctadecanoate + hexadecanoate + H(+). The catalysed reaction is 12-(9Z-octadecenoyloxy)-octadecanoate + H2O = 12-hydroxyoctadecanoate + (9Z)-octadecenoate + H(+). It catalyses the reaction 13-(9Z-octadecenoyloxy)-octadecanoate + H2O = 13-hydroxy-octadecanoate + (9Z)-octadecenoate + H(+). The enzyme catalyses 9-(9Z-hexadecenoyloxy)-octadecanoate + H2O = (9Z)-hexadecenoate + 9-hydroxy-octadecanoate + H(+). It carries out the reaction 12-(9Z-hexadecenoyloxy)-octadecanoate + H2O = 12-hydroxyoctadecanoate + (9Z)-hexadecenoate + H(+). The catalysed reaction is 13-(9Z-hexadecenoyloxy)-octadecanoate + H2O = 13-hydroxy-octadecanoate + (9Z)-hexadecenoate + H(+). It catalyses the reaction 12-octadecanoyloxy-octadecanoate + H2O = 12-hydroxyoctadecanoate + octadecanoate + H(+). The enzyme catalyses 13-octadecanoyloxy-octadecanoate + H2O = 13-hydroxy-octadecanoate + octadecanoate + H(+). It carries out the reaction 5-(9Z-hexadecenoyloxy)-octadecanoate + H2O = 5-hydroxy-octadecanoate + (9Z)-hexadecenoate + H(+). The catalysed reaction is 9-octadecanoyloxy-octadecanoate + H2O = 9-hydroxy-octadecanoate + octadecanoate + H(+). Activated by bile salts such as sodium taurocholate. Functionally, catalyzes the hydrolysis of a wide range of substrates including cholesteryl esters, phospholipids, lysophospholipids, di- and tri-acylglycerols, and fatty acid esters of hydroxy fatty acids (FAHFAs). Preferentially hydrolyzes FAHFAs with the ester bond further away from the carboxylate. Unsaturated FAHFAs are hydrolyzed more quickly than saturated FAHFAs. Has an essential role in the complete digestion of dietary lipids and their intestinal absorption, along with the absorption of fat-soluble vitamins. This Homo sapiens (Human) protein is Bile salt-activated lipase (CEL).